The primary structure comprises 262 residues: Global transcriptional regulator CodY (262 aa).

A GAF domain region spans residues 1 to 159; it reads MATLLEKTRK…ATTVIGVQLS (159 aa). Positions 207-226 form a DNA-binding region, H-T-H motif; it reads ASVIADKIGITRSVIVNALR.

The protein belongs to the CodY family.

It localises to the cytoplasm. Functionally, DNA-binding global transcriptional regulator which is involved in the adaptive response to starvation and acts by directly or indirectly controlling the expression of numerous genes in response to nutrient availability. During rapid exponential growth, CodY is highly active and represses genes whose products allow adaptation to nutrient depletion. The sequence is that of Global transcriptional regulator CodY from Lactococcus lactis subsp. cremoris (strain SK11).